A 113-amino-acid chain; its full sequence is CRISPR-associated endoribonuclease Cas2 (113 aa).

A Mg(2+)-binding site is contributed by D33.

This sequence belongs to the CRISPR-associated endoribonuclease Cas2 protein family. Homodimer, forms a heterotetramer with a Cas1 homodimer. It depends on Mg(2+) as a cofactor.

Functionally, CRISPR (clustered regularly interspaced short palindromic repeat), is an adaptive immune system that provides protection against mobile genetic elements (viruses, transposable elements and conjugative plasmids). CRISPR clusters contain sequences complementary to antecedent mobile elements and target invading nucleic acids. CRISPR clusters are transcribed and processed into CRISPR RNA (crRNA). Functions as a ssRNA-specific endoribonuclease. Involved in the integration of spacer DNA into the CRISPR cassette. The type III-A Csm effector complex binds crRNA and acts as a crRNA-guided RNase, DNase and cyclic oligoadenylate synthase; binding of target RNA cognate to the crRNA is required for all activities. The protein is CRISPR-associated endoribonuclease Cas2 of Mycobacterium tuberculosis (strain CDC 1551 / Oshkosh).